Here is a 178-residue protein sequence, read N- to C-terminus: Ribosome maturation factor RimP (178 aa).

The protein belongs to the RimP family.

It localises to the cytoplasm. Functionally, required for maturation of 30S ribosomal subunits. The protein is Ribosome maturation factor RimP of Cutibacterium acnes (strain DSM 16379 / KPA171202) (Propionibacterium acnes).